Here is a 277-residue protein sequence, read N- to C-terminus: MADPWQECMDYAVILARQAGEMIREALKNKMDVMIKSSPADLVTVTDQKVEKMLMSSIKEKYPYHSFIGEESVASGEKTVFTEQPTWIIDPIDGTTNFVHRFPFVAVSIGFVVNKEMEFGVVYSCVEDKMYTGRKGKGAFCNGQKLRVSQQEDITKSLLVTELGSSRKPETLRIVLSNMERLCSIPIHGIRSVGTAAVNMCLVATGGADAYYEMGIHCWDMAGAGIIVIEAGGVLLDVTGGPFDLMSRRIIAASNIALAERIAKELEIIPLQRDDES.

Residues Glu-70, Asp-90, Ile-92, and Asp-93 each coordinate Mg(2+). Glu-70 serves as a coordination point for substrate. Substrate-binding positions include 92–95, 194–196, Glu-213, and Asp-220; these read IDGT and GTA. Mg(2+) is bound at residue Asp-220.

Belongs to the inositol monophosphatase superfamily. As to quaternary structure, homodimer. Requires Mg(2+) as cofactor. As to expression, ubiquitous.

The protein localises to the cytoplasm. The enzyme catalyses a myo-inositol phosphate + H2O = myo-inositol + phosphate. The catalysed reaction is 1D-myo-inositol 1-phosphate + H2O = myo-inositol + phosphate. It carries out the reaction 1D-myo-inositol 2-phosphate + H2O = myo-inositol + phosphate. It catalyses the reaction 1D-myo-inositol 3-phosphate + H2O = myo-inositol + phosphate. The enzyme catalyses 1D-myo-inositol 4-phosphate + H2O = myo-inositol + phosphate. The catalysed reaction is 1D-myo-inositol 5-phosphate + H2O = myo-inositol + phosphate. It carries out the reaction 1D-myo-inositol 6-phosphate + H2O = myo-inositol + phosphate. It catalyses the reaction scyllo-inositol 1-phosphate + H2O = scyllo-inositol + phosphate. The enzyme catalyses alpha-D-galactose 1-phosphate + H2O = D-galactose + phosphate. The catalysed reaction is alpha-D-glucose 1-phosphate + H2O = D-glucose + phosphate. It carries out the reaction D-glucose 6-phosphate + H2O = D-glucose + phosphate. It catalyses the reaction beta-D-fructose 1-phosphate + H2O = D-fructose + phosphate. The enzyme catalyses glycerol 2-phosphate + H2O = glycerol + phosphate. The catalysed reaction is adenosine 2'-phosphate + H2O = adenosine + phosphate. The protein operates within polyol metabolism; myo-inositol biosynthesis; myo-inositol from D-glucose 6-phosphate: step 2/2. Its activity is regulated as follows. Activity with myo-inositol monophosphate and D-galactose 1-phosphate is inhibited by Li(+), Ca(2+) and Mn(2+), but also by Mg(2+) at concentrations above 3 mM. In terms of biological role, phosphatase involved in the dephosphorylation of myo-inositol monophosphate to generate myo-inositol. Is also able to dephosphorylate scyllo-inositol-phosphate, myo-inositol 1,4-diphosphate, scyllo-inositol-1,3-diphosphate and scyllo-inositol-1,4-diphosphate. Also dephosphorylates in vitro other sugar-phosphates including D-galactose-1-phosphate, glucose-1-phosphate, glucose-6-phosphate, fructose-1-phosphate, beta-glycerophosphate and 2'-AMP. Responsible for the provision of inositol required for synthesis of phosphatidylinositol and polyphosphoinositides, and involved in maintaining normal brain function. Has been implicated as the pharmacological target for lithium Li(+) action in brain. Is equally active with myo-inositol monophosphate and D-galactose 1-phosphate. In Rattus norvegicus (Rat), this protein is Inositol monophosphatase 1 (Impa1).